The primary structure comprises 164 residues: Peptidyl-prolyl cis-trans isomerase (164 aa).

Positions Phe7–Gln163 constitute a PPIase cyclophilin-type domain.

The protein belongs to the cyclophilin-type PPIase family. PPIase A subfamily.

Its subcellular location is the cytoplasm. The enzyme catalyses [protein]-peptidylproline (omega=180) = [protein]-peptidylproline (omega=0). Binds cyclosporin A (CsA). CsA mediates some of its effects via an inhibitory action on PPIase. Its function is as follows. PPIases accelerate the folding of proteins. It catalyzes the cis-trans isomerization of proline imidic peptide bonds in oligopeptides. The polypeptide is Peptidyl-prolyl cis-trans isomerase (Hemicentrotus pulcherrimus (Sea urchin)).